Reading from the N-terminus, the 278-residue chain is MSFSTRRQAYRAEKQDHRKELKHVKIDESVIEKVDKLSLPKKKFYRQRAHSNPFSDHQLEYPISPAHMDWSKLYPHFYDSEKKKMTKDVTIADIGCGYGGLMIDLSPEFPDEMILGMEIRVQVTNYVEDRIIALRTNHAKENGYQNINVLRGNAMKFLPNFFNKGQLSKIFFCFPDPHFKQRKHKARIVTDTLLSEYAYVLKEGGIIYTITDVLDLHEWMVKHLEEHPLFERLSEEWEAQDKCVSIMRNATEEGKKVERNKGDKYIACFVRLPTPDII.

Residues Gly-95, 118 to 119 (EI), 153 to 154 (NA), and Cys-173 each bind S-adenosyl-L-methionine. Residue Asp-176 is part of the active site. Position 251 to 253 (251 to 253 (TEE)) interacts with S-adenosyl-L-methionine.

The protein belongs to the class I-like SAM-binding methyltransferase superfamily. TrmB family. As to quaternary structure, forms a complex with TRM82.

The protein resides in the nucleus. It catalyses the reaction guanosine(46) in tRNA + S-adenosyl-L-methionine = N(7)-methylguanosine(46) in tRNA + S-adenosyl-L-homocysteine. Its pathway is tRNA modification; N(7)-methylguanine-tRNA biosynthesis. Functionally, catalyzes the formation of N(7)-methylguanine at position 46 (m7G46) in tRNA. The polypeptide is tRNA (guanine-N(7)-)-methyltransferase (Kluyveromyces lactis (strain ATCC 8585 / CBS 2359 / DSM 70799 / NBRC 1267 / NRRL Y-1140 / WM37) (Yeast)).